The sequence spans 362 residues: Aminomethyltransferase (362 aa).

The protein belongs to the GcvT family. The glycine cleavage system is composed of four proteins: P, T, L and H.

It carries out the reaction N(6)-[(R)-S(8)-aminomethyldihydrolipoyl]-L-lysyl-[protein] + (6S)-5,6,7,8-tetrahydrofolate = N(6)-[(R)-dihydrolipoyl]-L-lysyl-[protein] + (6R)-5,10-methylene-5,6,7,8-tetrahydrofolate + NH4(+). The glycine cleavage system catalyzes the degradation of glycine. The polypeptide is Aminomethyltransferase (Colwellia psychrerythraea (strain 34H / ATCC BAA-681) (Vibrio psychroerythus)).